An 88-amino-acid chain; its full sequence is Small ribosomal subunit protein uS17 (88 aa).

It belongs to the universal ribosomal protein uS17 family. Part of the 30S ribosomal subunit.

One of the primary rRNA binding proteins, it binds specifically to the 5'-end of 16S ribosomal RNA. The protein is Small ribosomal subunit protein uS17 of Prochlorococcus marinus subsp. pastoris (strain CCMP1986 / NIES-2087 / MED4).